Reading from the N-terminus, the 351-residue chain is sn-glycerol-3-phosphate import ATP-binding protein UgpC (351 aa).

Residues 4-234 (ITLKDLVKSY…PATLFVAGFI (231 aa)) form the ABC transporter domain. 36–43 (GPSGCGKS) provides a ligand contact to ATP.

The protein belongs to the ABC transporter superfamily. sn-glycerol-3-phosphate importer (TC 3.A.1.1.3) family. The complex is composed of two ATP-binding proteins (UgpC), two transmembrane proteins (UgpA and UgpE) and a solute-binding protein (UgpB).

The protein resides in the cell inner membrane. It carries out the reaction sn-glycerol 3-phosphate(out) + ATP + H2O = sn-glycerol 3-phosphate(in) + ADP + phosphate + H(+). Its function is as follows. Part of the ABC transporter complex UgpBAEC involved in sn-glycerol-3-phosphate (G3P) import. Responsible for energy coupling to the transport system. The chain is sn-glycerol-3-phosphate import ATP-binding protein UgpC from Ruegeria sp. (strain TM1040) (Silicibacter sp.).